The sequence spans 241 residues: Ribonuclease HII (241 aa).

An RNase H type-2 domain is found at 57-241 (NFIAGVDEAG…RTYVEKILKG (185 aa)). Residues Asp-63, Glu-64, and Asp-155 each contribute to the a divalent metal cation site.

The protein belongs to the RNase HII family. Requires Mn(2+) as cofactor. Mg(2+) is required as a cofactor.

The protein resides in the cytoplasm. It carries out the reaction Endonucleolytic cleavage to 5'-phosphomonoester.. Its function is as follows. Endonuclease that specifically degrades the RNA of RNA-DNA hybrids. The protein is Ribonuclease HII of Caldanaerobacter subterraneus subsp. tengcongensis (strain DSM 15242 / JCM 11007 / NBRC 100824 / MB4) (Thermoanaerobacter tengcongensis).